A 125-amino-acid polypeptide reads, in one-letter code: Ribosome-binding factor A (125 aa).

This sequence belongs to the RbfA family. Monomer. Binds 30S ribosomal subunits, but not 50S ribosomal subunits or 70S ribosomes.

The protein resides in the cytoplasm. Its function is as follows. One of several proteins that assist in the late maturation steps of the functional core of the 30S ribosomal subunit. Associates with free 30S ribosomal subunits (but not with 30S subunits that are part of 70S ribosomes or polysomes). Required for efficient processing of 16S rRNA. May interact with the 5'-terminal helix region of 16S rRNA. The sequence is that of Ribosome-binding factor A from Xylella fastidiosa (strain 9a5c).